The sequence spans 417 residues: Gamma-glutamyl phosphate reductase (417 aa).

It belongs to the gamma-glutamyl phosphate reductase family.

Its subcellular location is the cytoplasm. The enzyme catalyses L-glutamate 5-semialdehyde + phosphate + NADP(+) = L-glutamyl 5-phosphate + NADPH + H(+). Its pathway is amino-acid biosynthesis; L-proline biosynthesis; L-glutamate 5-semialdehyde from L-glutamate: step 2/2. Catalyzes the NADPH-dependent reduction of L-glutamate 5-phosphate into L-glutamate 5-semialdehyde and phosphate. The product spontaneously undergoes cyclization to form 1-pyrroline-5-carboxylate. The protein is Gamma-glutamyl phosphate reductase of Haemophilus influenzae (strain ATCC 51907 / DSM 11121 / KW20 / Rd).